We begin with the raw amino-acid sequence, 443 residues long: Threonine/serine transporter TdcC (443 aa).

11 helical membrane-spanning segments follow: residues 24 to 44, 45 to 65, 95 to 115, 140 to 160, 163 to 183, 207 to 227, 259 to 279, 319 to 339, 363 to 383, 385 to 405, and 423 to 443; these read WVLGLFGTAIGAGVLFFPISA, GIGGLLPIIFMLILAFPIAFF, VGGVVITFLYFFAICPLLWIY, VVALAILLVMAFFIYFGKDLM, VMGYLVFPFITCLVLISLSLI, ILVTVWLGIAIMVFSFNFSPI, ASVLMVVVVMFFAFSCLFTLS, ASIIALVAIFKSFFGHYLGTL, LNMISMVIIMGSTWVIAYINP, ILDLIGAMGAPIIAALLCLLP, and SNYFVTIIGLLTILNIVYQLM.

It belongs to the amino acid/polyamine transporter 2 family. SdaC/TdcC subfamily.

Its subcellular location is the cell inner membrane. It carries out the reaction L-threonine(in) + H(+)(in) = L-threonine(out) + H(+)(out). The catalysed reaction is L-serine(in) + H(+)(in) = L-serine(out) + H(+)(out). In terms of biological role, involved in the import of threonine and serine into the cell, with the concomitant import of a proton (symport system). The sequence is that of Threonine/serine transporter TdcC from Edwardsiella tarda.